The following is a 160-amino-acid chain: Nucleotide-binding protein VP1617 (160 aa).

This sequence belongs to the YajQ family.

In terms of biological role, nucleotide-binding protein. This chain is Nucleotide-binding protein VP1617, found in Vibrio parahaemolyticus serotype O3:K6 (strain RIMD 2210633).